Reading from the N-terminus, the 463-residue chain is Probable diacyglycerol O-acyltransferase tgs1 (463 aa).

Met1 carries the N-acetylmethionine modification. The Proton acceptor role is filled by His137.

The protein belongs to the long-chain O-acyltransferase family.

The catalysed reaction is an acyl-CoA + a 1,2-diacyl-sn-glycerol = a triacyl-sn-glycerol + CoA. The enzyme catalyses di-(9Z)-octadecenoylglycerol + (9Z)-octadecenoyl-CoA = 1,2,3-tri-(9Z-octadecenoyl)-glycerol + CoA. It participates in glycerolipid metabolism; triacylglycerol biosynthesis. Catalyzes the terminal and only committed step in triacylglycerol synthesis by using diacylglycerol and fatty acyl CoA as substrates. Required for storage lipid synthesis. Functionally, upon expression in E.coli functions as a triacylglycerol synthase, making triacylglycerol (TG) from diolein and long-chain fatty acyl-CoA. Prefers C(26:0)-CoA over C(18:1)-CoA. TG synthesis activity increases in M.tuberculosis upon oxygen depletion and NO treatment, with concomitant accumulation of TG in inclusion bodies. As disruption of the gene encoding this protein obviates TG synthesis this seems to be the major enzyme involved in production of TG. Has no wax synthase activity to produce wax esters. The protein is Probable diacyglycerol O-acyltransferase tgs1 (tgs1) of Mycobacterium tuberculosis (strain ATCC 25618 / H37Rv).